A 436-amino-acid polypeptide reads, in one-letter code: GTPase Der (436 aa).

2 consecutive EngA-type G domains span residues 3-168 and 177-352; these read PLIA…PESD and IRLA…DNRA. GTP is bound by residues 9 to 16, 56 to 60, 120 to 123, 183 to 190, 230 to 234, and 295 to 298; these read GRPNVGKS, DTGGY, NKVE, DTAGL, and NKWD. The region spanning 353–436 is the KH-like domain; the sequence is RKISTSALNR…VTISLRFLQK (84 aa).

Belongs to the TRAFAC class TrmE-Era-EngA-EngB-Septin-like GTPase superfamily. EngA (Der) GTPase family. In terms of assembly, associates with the 50S ribosomal subunit.

In terms of biological role, GTPase that plays an essential role in the late steps of ribosome biogenesis. The sequence is that of GTPase Der from Chlorobium phaeovibrioides (strain DSM 265 / 1930) (Prosthecochloris vibrioformis (strain DSM 265)).